The following is a 103-amino-acid chain: Small integral membrane protein 32 (103 aa).

A helical membrane pass occupies residues 55 to 75 (YLLLFFLLLLSVALVVLFIGC).

The protein localises to the membrane. The polypeptide is Small integral membrane protein 32 (Homo sapiens (Human)).